The primary structure comprises 383 residues: Glucose-1-phosphate adenylyltransferase (383 aa).

Alpha-D-glucose 1-phosphate contacts are provided by residues Tyr-99, Gly-164, 179–180 (EK), and Ser-190.

This sequence belongs to the bacterial/plant glucose-1-phosphate adenylyltransferase family. Homotetramer.

The enzyme catalyses alpha-D-glucose 1-phosphate + ATP + H(+) = ADP-alpha-D-glucose + diphosphate. The protein operates within glycan biosynthesis; glycogen biosynthesis. Involved in the biosynthesis of ADP-glucose, a building block required for the elongation reactions to produce glycogen. Catalyzes the reaction between ATP and alpha-D-glucose 1-phosphate (G1P) to produce pyrophosphate and ADP-Glc. The polypeptide is Glucose-1-phosphate adenylyltransferase (Halalkalibacterium halodurans (strain ATCC BAA-125 / DSM 18197 / FERM 7344 / JCM 9153 / C-125) (Bacillus halodurans)).